Reading from the N-terminus, the 225-residue chain is Holliday junction branch migration complex subunit RuvA (225 aa).

The tract at residues 1–71 (MISWINGDLV…EDSDLLFGFT (71 aa)) is domain I. The interval 72–150 (SKDQKNFFIE…SEILSEEEKS (79 aa)) is domain II. The flexible linker stretch occupies residues 151 to 161 (KDEFEIKDPEI). The interval 161-225 (IIKMIEDLQL…LDEDSSNKDR (65 aa)) is domain III.

Belongs to the RuvA family. As to quaternary structure, homotetramer. Forms an RuvA(8)-RuvB(12)-Holliday junction (HJ) complex. HJ DNA is sandwiched between 2 RuvA tetramers; dsDNA enters through RuvA and exits via RuvB. An RuvB hexamer assembles on each DNA strand where it exits the tetramer. Each RuvB hexamer is contacted by two RuvA subunits (via domain III) on 2 adjacent RuvB subunits; this complex drives branch migration. In the full resolvosome a probable DNA-RuvA(4)-RuvB(12)-RuvC(2) complex forms which resolves the HJ.

The protein localises to the cytoplasm. Functionally, the RuvA-RuvB-RuvC complex processes Holliday junction (HJ) DNA during genetic recombination and DNA repair, while the RuvA-RuvB complex plays an important role in the rescue of blocked DNA replication forks via replication fork reversal (RFR). RuvA specifically binds to HJ cruciform DNA, conferring on it an open structure. The RuvB hexamer acts as an ATP-dependent pump, pulling dsDNA into and through the RuvAB complex. HJ branch migration allows RuvC to scan DNA until it finds its consensus sequence, where it cleaves and resolves the cruciform DNA. The sequence is that of Holliday junction branch migration complex subunit RuvA from Prochlorococcus marinus (strain AS9601).